Reading from the N-terminus, the 33-residue chain is Brevinin-2GRb (33 aa).

As to expression, expressed by the skin glands.

Its subcellular location is the secreted. Its function is as follows. Antimicrobial peptide active against the Gram-positive bacterium S.aureus (MIC=25 uM) and against the Gram-negative bacteria E.coli (MIC=6 uM). Has no antifungal activity against C.albicans. Shows hemolytic activity against human erythrocytes only at high concentrations (LC(50)=180 uM). This is Brevinin-2GRb from Odorrana grahami (Yunnanfu frog).